Reading from the N-terminus, the 438-residue chain is Chromosomal replication initiator protein DnaA (438 aa).

The interval 1–68 (MKDNILSALK…VVKESLGKDA (68 aa)) is domain I, interacts with DnaA modulators. The domain II stretch occupies residues 68–98 (ATFEIVYKEIDITQENEEKGPLVRKRPLLIT). A domain III, AAA+ region region spans residues 99–314 (PLNPKYTFEN…GAILKLIAYK (216 aa)). Positions 142, 144, 145, and 146 each coordinate ATP. The domain IV, binds dsDNA stretch occupies residues 315–438 (NLYGSLNLSI…TKNFAQGESI (124 aa)).

It belongs to the DnaA family. As to quaternary structure, oligomerizes as a right-handed, spiral filament on DNA at oriC.

It localises to the cytoplasm. Functionally, plays an essential role in the initiation and regulation of chromosomal replication. ATP-DnaA binds to the origin of replication (oriC) to initiate formation of the DNA replication initiation complex once per cell cycle. Binds the DnaA box (a 9 base pair repeat at the origin) and separates the double-stranded (ds)DNA. Forms a right-handed helical filament on oriC DNA; dsDNA binds to the exterior of the filament while single-stranded (ss)DNA is stabiized in the filament's interior. The ATP-DnaA-oriC complex binds and stabilizes one strand of the AT-rich DNA unwinding element (DUE), permitting loading of DNA polymerase. After initiation quickly degrades to an ADP-DnaA complex that is not apt for DNA replication. Binds acidic phospholipids. In Thermosipho africanus (strain TCF52B), this protein is Chromosomal replication initiator protein DnaA.